Consider the following 375-residue polypeptide: D-aspartate oxidase (375 aa).

Residues 1-17 form the signal peptide; it reads MATVCVVGSGILGLAVA. FAD-binding residues include Ser9, Leu12, Asp34, Ser51, and Gly55. Asn203 carries an N-linked (GlcNAc...) asparagine glycan. Residues Arg322, Gly354, and Tyr355 each contribute to the FAD site.

It belongs to the DAMOX/DASOX family. Requires FAD as cofactor.

It catalyses the reaction D-aspartate + O2 + H2O = oxaloacetate + H2O2 + NH4(+). It carries out the reaction D-glutamate + O2 + H2O = H2O2 + 2-oxoglutarate + NH4(+). Selectively catalyzes the oxidative deamination of acidic amino acids. Protects the organism from the toxicity of D-amino acids. Enables the organism to utilize D-amino acids as a source of nutrients. Enables the organism to utilize D-aspartate as a nitrogen source. This is D-aspartate oxidase (DDO) from Komagataella phaffii (strain GS115 / ATCC 20864) (Yeast).